The chain runs to 227 residues: Octanoyltransferase (227 aa).

The BPL/LPL catalytic domain maps to 35-210 (DKTPDEIWLV…TFLQLVGYSA (176 aa)). Substrate is bound by residues 74 to 81 (RGGQVTYH), 141 to 143 (SLG), and 154 to 156 (GLA). Cys-172 serves as the catalytic Acyl-thioester intermediate.

This sequence belongs to the LipB family.

The protein resides in the cytoplasm. The enzyme catalyses octanoyl-[ACP] + L-lysyl-[protein] = N(6)-octanoyl-L-lysyl-[protein] + holo-[ACP] + H(+). It functions in the pathway protein modification; protein lipoylation via endogenous pathway; protein N(6)-(lipoyl)lysine from octanoyl-[acyl-carrier-protein]: step 1/2. Catalyzes the transfer of endogenously produced octanoic acid from octanoyl-acyl-carrier-protein onto the lipoyl domains of lipoate-dependent enzymes. Lipoyl-ACP can also act as a substrate although octanoyl-ACP is likely to be the physiological substrate. This is Octanoyltransferase from Pectobacterium atrosepticum (strain SCRI 1043 / ATCC BAA-672) (Erwinia carotovora subsp. atroseptica).